Reading from the N-terminus, the 1802-residue chain is Transposon Ty4-H Gag-Pol polyprotein (1802 aa).

Positions arginine 39–asparagine 115 form a coiled coil. Residues asparagine 381–tyrosine 501 are ty4 protease. The active-site For protease activity; shared with dimeric partner is aspartate 414. The segment at alanine 539–cysteine 599 is integrase-type zinc finger-like. The Integrase catalytic domain occupies threonine 619–proline 786. Positions 630 and 695 each coordinate Mg(2+). The interval lysine 1223 to lysine 1248 is disordered. One can recognise a Reverse transcriptase Ty1/copia-type domain in the interval arginine 1375–asparagine 1510. 6 residues coordinate Mg(2+): aspartate 1383, aspartate 1462, aspartate 1463, aspartate 1644, glutamate 1686, and aspartate 1720. Residues aspartate 1644–lysine 1790 enclose the RNase H Ty1/copia-type domain.

In terms of assembly, the protease is a homodimer, whose active site consists of two apposed aspartic acid residues. In terms of processing, proteolytically processed into capsid protein (CA), Ty4 protease (PR), integrase (IN) and reverse transcriptase/ribonuclease H (RT) proteins. Initially, virus-like particles (VLPs) are composed of the structural unprocessed proteins Gag and Gag-Pol, and also contain the host initiator methionine tRNA (tRNA(i)-Met) which serves as a primer for minus-strand DNA synthesis, and a dimer of genomic Ty RNA. Processing of the polyproteins occurs within the particle and proceeds by an ordered pathway, called maturation. First, the protease (PR) is released by autocatalytic cleavage of the Gag-Pol polyprotein, and this cleavage is a prerequisite for subsequent processing at the remaining sites to release the mature structural and catalytic proteins. Maturation takes place prior to the RT reaction and is required to produce transposition-competent VLPs.

Its subcellular location is the cytoplasm. It is found in the nucleus. The enzyme catalyses DNA(n) + a 2'-deoxyribonucleoside 5'-triphosphate = DNA(n+1) + diphosphate. It carries out the reaction Endonucleolytic cleavage to 5'-phosphomonoester.. Functionally, capsid protein (CA) is the structural component of the virus-like particle (VLP), forming the shell that encapsulates the retrotransposons dimeric RNA genome. In terms of biological role, the aspartyl protease (PR) mediates the proteolytic cleavages of the Gag and Gag-Pol polyproteins after assembly of the VLP. Its function is as follows. Reverse transcriptase/ribonuclease H (RT) is a multifunctional enzyme that catalyzes the conversion of the retro-elements RNA genome into dsDNA within the VLP. The enzyme displays a DNA polymerase activity that can copy either DNA or RNA templates, and a ribonuclease H (RNase H) activity that cleaves the RNA strand of RNA-DNA heteroduplexes during plus-strand synthesis and hydrolyzes RNA primers. The conversion leads to a linear dsDNA copy of the retrotransposon that includes long terminal repeats (LTRs) at both ends. Integrase (IN) targets the VLP to the nucleus, where a subparticle preintegration complex (PIC) containing at least integrase and the newly synthesized dsDNA copy of the retrotransposon must transit the nuclear membrane. Once in the nucleus, integrase performs the integration of the dsDNA into the host genome. The polypeptide is Transposon Ty4-H Gag-Pol polyprotein (TY4B-H) (Saccharomyces cerevisiae (strain ATCC 204508 / S288c) (Baker's yeast)).